Here is a 340-residue protein sequence, read N- to C-terminus: GTPase Obg (340 aa).

In terms of domain architecture, Obg spans 1-159 (MGFIDEVKLC…KHVLLKLKVL (159 aa)). The OBG-type G domain occupies 160–329 (SDVGIIGMPN…LSEKLKKSNS (170 aa)). GTP contacts are provided by residues 166–173 (GMPNAGKS), 191–195 (FTTVR), 212–215 (DIPG), 279–282 (NKCD), and 310–312 (NGD). Mg(2+)-binding residues include Ser-173 and Thr-193.

Belongs to the TRAFAC class OBG-HflX-like GTPase superfamily. OBG GTPase family. In terms of assembly, monomer. The cofactor is Mg(2+).

It is found in the cytoplasm. An essential GTPase which binds GTP, GDP and possibly (p)ppGpp with moderate affinity, with high nucleotide exchange rates and a fairly low GTP hydrolysis rate. Plays a role in control of the cell cycle, stress response, ribosome biogenesis and in those bacteria that undergo differentiation, in morphogenesis control. The chain is GTPase Obg from Wolbachia pipientis wMel.